Here is a 142-residue protein sequence, read N- to C-terminus: AP-2 complex subunit sigma (142 aa).

It belongs to the adaptor complexes small subunit family. Adaptor protein complex 2 (AP-2) is a heterotetramer composed of two large adaptins (alpha-type and beta-type subunits), a medium adaptin (mu-type subunit AP50) and a small adaptin (sigma-type subunit AP17).

The protein localises to the cell membrane. It is found in the membrane. Its subcellular location is the coated pit. Component of the adaptor complexes which link clathrin to receptors in coated vesicles. Clathrin-associated protein complexes are believed to interact with the cytoplasmic tails of membrane proteins, leading to their selection and concentration. This is AP-2 complex subunit sigma (ap2s1) from Dictyostelium discoideum (Social amoeba).